Here is a 135-residue protein sequence, read N- to C-terminus: BolA-like protein 1 (135 aa).

Residue Ser-81 is modified to Phosphoserine. Positions 114 to 135 (WKENPQLDTSPACLGGSKKSRN) are disordered.

The protein belongs to the BolA/IbaG family. As to quaternary structure, interacts with GLRX5.

It localises to the mitochondrion. Functionally, acts as a mitochondrial iron-sulfur (Fe-S) cluster assembly factor that facilitates (Fe-S) cluster insertion into a subset of mitochondrial proteins. Probably acts together with the monothiol glutaredoxin GLRX5. May protect cells against oxidative stress. This Bos taurus (Bovine) protein is BolA-like protein 1 (BOLA1).